The sequence spans 308 residues: N-acetylmuramic acid 6-phosphate etherase (308 aa).

The 164-residue stretch at Ile62–Lys225 folds into the SIS domain. Glu90 (proton donor) is an active-site residue. Glu121 is an active-site residue.

This sequence belongs to the GCKR-like family. MurNAc-6-P etherase subfamily. Homodimer.

The catalysed reaction is N-acetyl-D-muramate 6-phosphate + H2O = N-acetyl-D-glucosamine 6-phosphate + (R)-lactate. It participates in amino-sugar metabolism; 1,6-anhydro-N-acetylmuramate degradation. Its pathway is amino-sugar metabolism; N-acetylmuramate degradation. It functions in the pathway cell wall biogenesis; peptidoglycan recycling. In terms of biological role, specifically catalyzes the cleavage of the D-lactyl ether substituent of MurNAc 6-phosphate, producing GlcNAc 6-phosphate and D-lactate. Together with AnmK, is also required for the utilization of anhydro-N-acetylmuramic acid (anhMurNAc) either imported from the medium or derived from its own cell wall murein, and thus plays a role in cell wall recycling. This is N-acetylmuramic acid 6-phosphate etherase from Vibrio campbellii (strain ATCC BAA-1116).